A 124-amino-acid polypeptide reads, in one-letter code: UPF0375 protein Y45F10C.4 (124 aa).

Residues 1–23 (MNFLPSTVLLLSFVVAIISGSFS) form the signal peptide. 2 N-linked (GlcNAc...) asparagine glycosylation sites follow: asparagine 36 and asparagine 62.

Belongs to the UPF0375 family.

Its subcellular location is the secreted. The chain is UPF0375 protein Y45F10C.4 from Caenorhabditis elegans.